The following is a 143-amino-acid chain: Antiholin-like protein LrgA (143 aa).

4 helical membrane-spanning segments follow: residues 6-26 (VYSF…SNII), 30-50 (LPIP…LLCL), 61-81 (LGTA…ISVI), and 97-117 (VIVV…QFIL).

It belongs to the CidA/LrgA family. LrgA subfamily.

The protein resides in the cell membrane. In terms of biological role, inhibits the expression or activity of extracellular murein hydrolases by interacting, possibly with LrgB, with the holin-like protein CidA. The LrgAB and CidA proteins may affect the proton motive force of the membrane. May be involved in programmed cell death (PCD), possibly triggering PCD in response to antibiotics and environmental stresses. The polypeptide is Antiholin-like protein LrgA (Bacillus cereus (strain AH187)).